The following is a 249-amino-acid chain: Enolase-phosphatase E1 (249 aa).

Mg(2+) is bound by residues aspartate 14 and glutamate 16. Substrate-binding positions include 141 to 142 (SS) and lysine 175. Aspartate 200 serves as a coordination point for Mg(2+).

Belongs to the HAD-like hydrolase superfamily. MasA/MtnC family. As to quaternary structure, monomer. The cofactor is Mg(2+).

It localises to the cytoplasm. The protein resides in the nucleus. It carries out the reaction 5-methylsulfanyl-2,3-dioxopentyl phosphate + H2O = 1,2-dihydroxy-5-(methylsulfanyl)pent-1-en-3-one + phosphate. The protein operates within amino-acid biosynthesis; L-methionine biosynthesis via salvage pathway; L-methionine from S-methyl-5-thio-alpha-D-ribose 1-phosphate: step 3/6. It functions in the pathway amino-acid biosynthesis; L-methionine biosynthesis via salvage pathway; L-methionine from S-methyl-5-thio-alpha-D-ribose 1-phosphate: step 4/6. Bifunctional enzyme that catalyzes the enolization of 2,3-diketo-5-methylthiopentyl-1-phosphate (DK-MTP-1-P) into the intermediate 2-hydroxy-3-keto-5-methylthiopentenyl-1-phosphate (HK-MTPenyl-1-P), which is then dephosphorylated to form the acireductone 1,2-dihydroxy-3-keto-5-methylthiopentene (DHK-MTPene). The protein is Enolase-phosphatase E1 of Drosophila virilis (Fruit fly).